The chain runs to 161 residues: 2-C-methyl-D-erythritol 2,4-cyclodiphosphate synthase (161 aa).

2 residues coordinate a divalent metal cation: Asp11 and His13. 4-CDP-2-C-methyl-D-erythritol 2-phosphate contacts are provided by residues Asp11 to His13 and His37 to Ser38. His45 contacts a divalent metal cation. 4-CDP-2-C-methyl-D-erythritol 2-phosphate-binding positions include Asp59 to Gly61, Thr135 to Glu138, and Arg145.

This sequence belongs to the IspF family. In terms of assembly, homotrimer. A divalent metal cation is required as a cofactor.

It carries out the reaction 4-CDP-2-C-methyl-D-erythritol 2-phosphate = 2-C-methyl-D-erythritol 2,4-cyclic diphosphate + CMP. The protein operates within isoprenoid biosynthesis; isopentenyl diphosphate biosynthesis via DXP pathway; isopentenyl diphosphate from 1-deoxy-D-xylulose 5-phosphate: step 4/6. Functionally, involved in the biosynthesis of isopentenyl diphosphate (IPP) and dimethylallyl diphosphate (DMAPP), two major building blocks of isoprenoid compounds. Catalyzes the conversion of 4-diphosphocytidyl-2-C-methyl-D-erythritol 2-phosphate (CDP-ME2P) to 2-C-methyl-D-erythritol 2,4-cyclodiphosphate (ME-CPP) with a corresponding release of cytidine 5-monophosphate (CMP). In Cyanothece sp. (strain PCC 7425 / ATCC 29141), this protein is 2-C-methyl-D-erythritol 2,4-cyclodiphosphate synthase.